We begin with the raw amino-acid sequence, 1099 residues long: MRSEGAAPRRAARYGALSLVLATLLGQVTESRGVMDNIQRFSSLPPYLPVSFHVLRAETAFFLKEANPDPLRNASLQSRVESFFIYKAQQPPVLNVSYGPYSAEKVIPLDLMLNPNFLGPTSKFPFDWRLKAYILQEKVYLSHPKVQVLFHIVGRDWDDHRDEKLPCLRVFAFRDSREVRGSCRLGGPLGLCVAQLEMLPGWFSPPAVVSGRRRPAERPEGSPVELYYAVQPGDERGDCTGGDTRKDNAIRPGKDGQEGRTSHLQKIGTISLYRAQDSNQLSELRLDGNVVIWLPSQPVKQGDIVTASVTIANNSTVDHFILRAKVKKGVNILTVQTSEPRQWDVRQEVGNGGKHTTTSVACQRLGPGARNRSSNLFSEVMQMNFEIASFSSLSGTQPITWQVEYPRKGATDIAVSEIFISQKDLVAIVPLAMDTELLNTAILTGKTVAMPVRVVSVEENSTLRDISELVECKATDENVIKVSDHCDYVFVNGKEIKGKMDSVVNFTYQHLSAPLHVTVWVPRLPLQIEVSDTELSQVKGWRVPIVASKRPTRDSEEEEEEEQKGRGCTLQFQHATVRVLTQFVSEGAGPWGQLSHLLSPDWQFDITHLVADFMKLESPHIATLQDSRVLVGREVGMTTIQVLSPLSDSILAEKTVTVLDDKVSVTDLAVQVVAGLSVTLHPISENNKATSAVAMAEELLRAPKKEAIISTWLQFSDGSVTPLDIYDSKDFSLTAISLDEAVVSIPQPLSPWWPTVVAEGEGQGPLLRVDMSIAEACQKSKRKSVLAVGIGHVGVKFGWDDADSSQTGEKDEEEIKNHASDRRQKIQDLERPGQDELYHGNFPGDREEGALSATTTTKSLLDNNVGKSGRRDGARLHSIPIDFTNFPAHVDLPKAKTRGTLEENGLMQTAHGLSDLEIGMYALLGVFCLAILVFLINCATFAFKYRHKQVPLEGQASMTHSHDWVWLGNEAELLENIGDLSPPQDEHTTIIDRGLGGCEENNHLLLNGGSQKPTQSQVHRPPGSGGRQTREPRQEPANSPTSKMKKVKFATFTIPPEESCPTVNSILSGEDDIKWVCQDLDVGAPKELRTYLEKFQDSV.

Residues 1–31 (MRSEGAAPRRAARYGALSLVLATLLGQVTES) form the signal peptide. Over 32–915 (RGVMDNIQRF…LMQTAHGLSD (884 aa)) the chain is Extracellular. Asparagine 95 carries an N-linked (GlcNAc...) asparagine glycan. The disordered stretch occupies residues 237-260 (GDCTGGDTRKDNAIRPGKDGQEGR). N-linked (GlcNAc...) asparagine glycans are attached at residues asparagine 314 and asparagine 371. Positions 801 to 872 (DADSSQTGEK…NNVGKSGRRD (72 aa)) are disordered. Over residues 813–849 (EEIKNHASDRRQKIQDLERPGQDELYHGNFPGDREEG) the composition is skewed to basic and acidic residues. Residues 916-936 (LEIGMYALLGVFCLAILVFLI) traverse the membrane as a helical segment. Residues 937 to 1099 (NCATFAFKYR…TYLEKFQDSV (163 aa)) lie on the Cytoplasmic side of the membrane. The disordered stretch occupies residues 1002–1045 (NHLLLNGGSQKPTQSQVHRPPGSGGRQTREPRQEPANSPTSKMK). Residues 1008–1018 (GGSQKPTQSQV) are compositionally biased toward polar residues.

Belongs to the TMEM132 family.

Its subcellular location is the membrane. The sequence is that of Transmembrane protein 132C (Tmem132c) from Mus musculus (Mouse).